The sequence spans 50 residues: Ribosome-inactivating protein lyophyllin (50 aa).

It catalyses the reaction Endohydrolysis of the N-glycosidic bond at one specific adenosine on the 28S rRNA.. In terms of biological role, N-glycosylase that inhibits protein synthesis by depurinating ribosomal rRNA, and thus acts as a ribosomal inactivating protein (RIP). Has adenine polynucleotide glycosidase activity on the poly(A) substrate A30-ssDNA. Inhibits cell-free translation in rabbit reticulocyte lysate system with an IC(50) of 1 nM. May function in the defense response to pathogens. Displays antifungal activity against C.comatus and P.piricola, but not against R.solani, M.arachidicola and C.gossypii. Inhibits mycelial growth in P.piricola with an IC(50) of 2.5 uM. Has cytotoxic activity against the human cancer cell lines Hela, HepG2, and JAR, with IC(50) of 358.8, 489.8, and 926.9 nM respectively. It also inhibits HIV-1 reverse transcriptase activity (IC(50)=7.9 nM) and disrupts mouse embryonic development. The chain is Ribosome-inactivating protein lyophyllin from Lyophyllum shimeji (Hon-shimeji).